Consider the following 681-residue polypeptide: Envelope glycoprotein (681 aa).

The signal sequence occupies residues Met-1–Thr-18. Over Leu-19–Asp-648 the chain is Extracellular. Residues Ser-38–His-188 are receptor-binding. Residues Asn-94, Asn-171, Asn-190, Asn-202, Asn-207, Asn-219, Asn-223, and Asn-255 are each glycosylated (N-linked (GlcNAc...) asparagine; by host). The tract at residues Asn-223–Phe-351 is disordered. The segment covering Pro-244–Pro-259 has biased composition (low complexity). The mucin-like region stretch occupies residues Glu-277–Pro-455. Polar residues-rich tracts occupy residues Pro-278–Leu-290 and Glu-308–Ile-341. N-linked (GlcNAc...) asparagine; by host glycans are attached at residues Asn-310, Asn-323, Asn-326, Asn-337, Asn-344, Asn-345, Asn-350, Asn-360, Asn-389, Asn-397, Asn-408, and Asn-487. Low complexity predominate over residues Ser-342–Phe-351. Residues Thr-366–Leu-414 are compositionally biased toward polar residues. The segment at Thr-366–Thr-425 is disordered. A fusion peptide region spans residues Gly-529–Ile-549. Residues Asn-564 and Asn-619 are each glycosylated (N-linked (GlcNAc...) asparagine; by host). A helical transmembrane segment spans residues Trp-649–Leu-669. The Cytoplasmic portion of the chain corresponds to Ser-670–Gly-681. Residues Cys-671 and Cys-673 are each lipidated (S-palmitoyl cysteine; by host).

This sequence belongs to the filoviruses glycoprotein family. As to quaternary structure, homotrimer; each monomer consists of a GP1 and a GP2 subunit linked by disulfide bonds. The resulting peplomers (GP1,2) protrude from the virus surface as spikes. GP1,2 interacts with human CD209 and CLEC4M (collectively referred to as DC-SIGN(R)). Asialoglycoprotein receptor (ASGP-R) may be a liver-specific receptor for GP1,2. Members of the Tyro3 receptor tyrosine kinase family may be cell entry factors interacting with GP1,2. Post-translationally, N-glycosylated. In terms of processing, O-glycosylated in the mucin-like region. Specific enzymatic cleavages in vivo yield mature proteins. The precursor is processed into GP1 and GP2 by host cell furin in the trans Golgi, and maybe by other host proteases, to yield the mature GP1 and GP2 proteins. The cleavage site corresponds to the furin optimal cleavage sequence [KR]-X-[KR]-R. Post-translationally, GP1 is phosphorylated on serine residues between residues 260 and 273.

It is found in the virion membrane. The protein localises to the host cell membrane. Its function is as follows. GP1 is responsible for binding to the receptor(s) on target cells. Interacts with CD209/DC-SIGN and CLEC4M/DC-SIGNR which act as cofactors for virus entry into the host cell. Binding to CD209 and CLEC4M, which are respectively found on dendritic cells (DCs), and on endothelial cells of liver sinusoids and lymph node sinuses, facilitate infection of macrophages and endothelial cells. These interactions not only facilitate virus cell entry, but also allow capture of viral particles by DCs and subsequent transmission to susceptible cells without DCs infection (trans infection). In terms of biological role, GP2 acts as a class I viral fusion protein. Under the current model, the protein has at least 3 conformational states: pre-fusion native state, pre-hairpin intermediate state, and post-fusion hairpin state. During viral and target cell membrane fusion, the coiled coil regions (heptad repeats) assume a trimer-of-hairpins structure, positioning the fusion peptide in close proximity to the C-terminal region of the ectodomain. The formation of this structure appears to drive apposition and subsequent fusion of viral and target cell membranes. Responsible for penetration of the virus into the cell cytoplasm by mediating the fusion of the membrane of the endocytosed virus particle with the endosomal membrane. Low pH in endosomes induces an irreversible conformational change in GP2, releasing the fusion hydrophobic peptide. The protein is Envelope glycoprotein (GP) of Lake Victoria marburgvirus (strain Popp-67) (MARV).